Reading from the N-terminus, the 287-residue chain is 3-alpha-hydroxysteroid sulfotransferase (287 aa).

44-49 (KSGTNW) contacts 3'-phosphoadenylyl sulfate. Residues W72 and W77 each coordinate substrate. The Proton acceptor role is filled by H99. 3'-phosphoadenylyl sulfate-binding positions include R121, S129, Y184, 218–223 (SSFQFM), and 247–249 (RKG).

Belongs to the sulfotransferase 1 family. As to quaternary structure, homodimer. In terms of tissue distribution, adrenal gland and liver.

The protein localises to the cytoplasm. The enzyme catalyses an alcohol + 3'-phosphoadenylyl sulfate = an alkyl sulfate + adenosine 3',5'-bisphosphate + H(+). Functionally, sulfotransferase that utilizes 3'-phospho-5'-adenylyl sulfate (PAPS) as sulfonate donor to catalyze the sulfonation of 3-alpha-hydroxyl groups of neutral steroids. The polypeptide is 3-alpha-hydroxysteroid sulfotransferase (STD1) (Cavia porcellus (Guinea pig)).